We begin with the raw amino-acid sequence, 552 residues long: Chaperonin GroEL (552 aa).

Residues 30 to 33 (TLGP), K51, 87 to 91 (DGTTT), G415, 479 to 481 (NAA), and D495 contribute to the ATP site.

The protein belongs to the chaperonin (HSP60) family. Forms a cylinder of 14 subunits composed of two heptameric rings stacked back-to-back. Interacts with the co-chaperonin GroES.

The protein resides in the cytoplasm. The enzyme catalyses ATP + H2O + a folded polypeptide = ADP + phosphate + an unfolded polypeptide.. Together with its co-chaperonin GroES, plays an essential role in assisting protein folding. The GroEL-GroES system forms a nano-cage that allows encapsulation of the non-native substrate proteins and provides a physical environment optimized to promote and accelerate protein folding. The sequence is that of Chaperonin GroEL from Nitrosospira multiformis (strain ATCC 25196 / NCIMB 11849 / C 71).